Reading from the N-terminus, the 529-residue chain is Bifunctional purine biosynthesis protein PurH (529 aa).

Residues 1-148 enclose the MGS-like domain; the sequence is MQQRRPVRRA…KNHKDVAIVV (148 aa). Position 287 is an N6-acetyllysine (lysine 287).

This sequence belongs to the PurH family.

The catalysed reaction is (6R)-10-formyltetrahydrofolate + 5-amino-1-(5-phospho-beta-D-ribosyl)imidazole-4-carboxamide = 5-formamido-1-(5-phospho-D-ribosyl)imidazole-4-carboxamide + (6S)-5,6,7,8-tetrahydrofolate. It catalyses the reaction IMP + H2O = 5-formamido-1-(5-phospho-D-ribosyl)imidazole-4-carboxamide. It functions in the pathway purine metabolism; IMP biosynthesis via de novo pathway; 5-formamido-1-(5-phospho-D-ribosyl)imidazole-4-carboxamide from 5-amino-1-(5-phospho-D-ribosyl)imidazole-4-carboxamide (10-formyl THF route): step 1/1. Its pathway is purine metabolism; IMP biosynthesis via de novo pathway; IMP from 5-formamido-1-(5-phospho-D-ribosyl)imidazole-4-carboxamide: step 1/1. This Escherichia coli O9:H4 (strain HS) protein is Bifunctional purine biosynthesis protein PurH.